Here is a 318-residue protein sequence, read N- to C-terminus: MWLKSLLLCLYSLVLCQVHAAPSSGKQITSKDVDLQKKYEPSPPATHRGIITIEYFDPVSKSMKEADLTFELYGTVVPKTVNNFAMLAHGVKAVIEGKDPNDIHTYSYRKTKINKVYPNKYIQGGVVAPDVGPFTVYGPKFDDENFYLKHDRPERLAMAYFGPDSNTSEFIITTKADGNEELDGKSVVFGQITSGLDQLMDAIQYTETDEYGKPQHELRFLYFVLEILKISNILDLHAAYTEKVEKFRNGDVSVGSTLENIFRNDKAYTPLTTSTGTTAYDLNHPISRALMCLTVLGLCFIAYKGMHEKPHTVSLRHK.

Residues 1-20 form the signal peptide; it reads MWLKSLLLCLYSLVLCQVHA. The 171-residue stretch at 55 to 225 folds into the PPIase cyclophilin-type domain; that stretch reads YFDPVSKSMK…HELRFLYFVL (171 aa). The N-linked (GlcNAc...) asparagine glycan is linked to Asn-166. Residues 286–303 form a helical membrane-spanning segment; that stretch reads ISRALMCLTVLGLCFIAY.

The protein localises to the membrane. The catalysed reaction is [protein]-peptidylproline (omega=180) = [protein]-peptidylproline (omega=0). Its function is as follows. PPIases accelerate the folding of proteins. It catalyzes the cis-trans isomerization of proline imidic peptide bonds in oligopeptides. The sequence is that of Peptidyl-prolyl cis-trans isomerase CPR4 (CPR4) from Saccharomyces cerevisiae (strain ATCC 204508 / S288c) (Baker's yeast).